The chain runs to 224 residues: Urease accessory protein UreF 2 (224 aa).

This sequence belongs to the UreF family. UreD, UreF and UreG form a complex that acts as a GTP-hydrolysis-dependent molecular chaperone, activating the urease apoprotein by helping to assemble the nickel containing metallocenter of UreC. The UreE protein probably delivers the nickel.

Its subcellular location is the cytoplasm. Its function is as follows. Required for maturation of urease via the functional incorporation of the urease nickel metallocenter. The sequence is that of Urease accessory protein UreF 2 from Pseudomonas syringae pv. tomato (strain ATCC BAA-871 / DC3000).